We begin with the raw amino-acid sequence, 441 residues long: Glutamate-1-semialdehyde 2,1-aminomutase (441 aa).

Position 270 is an N6-(pyridoxal phosphate)lysine (Lys270).

The protein belongs to the class-III pyridoxal-phosphate-dependent aminotransferase family. HemL subfamily. Homodimer. The cofactor is pyridoxal 5'-phosphate.

Its subcellular location is the cytoplasm. The catalysed reaction is (S)-4-amino-5-oxopentanoate = 5-aminolevulinate. Its pathway is porphyrin-containing compound metabolism; protoporphyrin-IX biosynthesis; 5-aminolevulinate from L-glutamyl-tRNA(Glu): step 2/2. This chain is Glutamate-1-semialdehyde 2,1-aminomutase (hemL), found in Propionibacterium freudenreichii subsp. freudenreichii.